A 55-amino-acid polypeptide reads, in one-letter code: Trypsin inhibitor ClTI-1 (55 aa).

The region spanning 1–55 (SIPPACDKYSRLPGCPRDYSPVCGTDGKTYPNECVLCLSNSEENKNVQIYKSGMC) is the Kazal-like domain. Cystine bridges form between Cys-6–Cys-37, Cys-15–Cys-34, and Cys-23–Cys-55.

The protein resides in the secreted. In terms of biological role, inhibits trypsin and plasmin. This Gallus gallus (Chicken) protein is Trypsin inhibitor ClTI-1.